We begin with the raw amino-acid sequence, 91 residues long: Acylphosphatase (91 aa).

Positions 5-91 (WKKWNVRGVV…QEYKDFHVEF (87 aa)) constitute an Acylphosphatase-like domain. Active-site residues include R20 and N38.

It belongs to the acylphosphatase family.

It carries out the reaction an acyl phosphate + H2O = a carboxylate + phosphate + H(+). The protein is Acylphosphatase (acyP) of Fervidobacterium nodosum (strain ATCC 35602 / DSM 5306 / Rt17-B1).